A 1004-amino-acid polypeptide reads, in one-letter code: Receptor-type tyrosine-protein phosphatase N2 (1004 aa).

Positions 1-27 are cleaved as a signal peptide; sequence MGLPLPLLLLLLLPPPLPRALPAPASA. Residues 1–409 form an involved in localization to secretory granules; interaction with CPE region; it reads MGLPLPLLLL…PEAPLLEKSS (409 aa). Residues 28-603 lie on the Extracellular side of the membrane; that stretch reads RGRQLPGRLG…HPEEQEDSTK (576 aa). An Omega-N-methylarginine modification is found at arginine 259. Disordered regions lie at residues 274 to 294, 333 to 360, and 393 to 459; these read APAL…SLSM, QSDP…DAPE, and DHGS…WRLE. At serine 340 the chain carries Phosphoserine. 2 stretches are compositionally biased toward basic and acidic residues: residues 341 to 356 and 407 to 418; these read QESH…REQA and KSSRAEMKKSEQ. The segment covering 419-430 has biased composition (acidic residues); the sequence is PEEVLSSEEETA. Serine 424 and serine 425 each carry phosphoserine. A compositionally biased stretch (basic and acidic residues) spans 431 to 450; it reads GVEHVKSRTYSKDLLERKPN. A glycan (N-linked (GlcNAc...) asparagine) is linked at asparagine 553. Residues 604–624 traverse the membrane as a helical segment; that stretch reads FIVLTFLSIACILAVLLASSL. Residues 625–1004 lie on the Cytoplasmic side of the membrane; the sequence is AYCLRHNSHY…VNAILKALPQ (380 aa). Residues 655–664 carry the Tyrosine-based internalization motif motif; that stretch reads YQELCRQRMA. Residues 665–710 form a disordered region; sequence VRPQDHSEGPHTSRINSVSSQLSDGPMPSPSARSSTSSWSEEPAQS. The span at 677 to 687 shows a compositional bias: polar residues; that stretch reads SRINSVSSQLS. Serine 681 bears the Phosphoserine; by PKA mark. Serine 687 is subject to Phosphoserine. Low complexity predominate over residues 694 to 710; it reads PSARSSTSSWSEEPAQS. Threonine 700 carries the phosphothreonine; by PKA modification. Positions 734–994 constitute a Tyrosine-protein phosphatase domain; that stretch reads LEKEWEALCA…EFALTAVAEE (261 aa). Substrate-binding positions include aspartate 902 and 934 to 940; that span reads CSDGAGR. Cysteine 934 serves as the catalytic Phosphocysteine intermediate. At lysine 959 the chain carries N6-acetyllysine. Position 979 (glutamine 979) interacts with substrate. Residues 993–999 carry the Leucine-based sorting signal motif; it reads EEVNAIL.

It belongs to the protein-tyrosine phosphatase family. Receptor class 8 subfamily. Self-associates. Interacts (via cytoplasmic domain) with PTPRN (via cytoplasmic domain). Interacts (precursor form) with CPE. Interacts with HAP1. Interacts with AP2A1 or AP2A2 and AP1G1; indicative for an association with adaptor protein complex 2 (AP-2) and adaptor protein complex 1 (AP-1). Interacts with AP2M1; indicative for an association with adaptor protein complex 2 (AP-2). Interacts with MYO5A. Post-translationally, subject to proteolytic cleavage at multiple sites.

The protein resides in the cytoplasmic vesicle. Its subcellular location is the secretory vesicle membrane. The protein localises to the secretory vesicle. It is found in the synaptic vesicle membrane. It catalyses the reaction O-phospho-L-tyrosyl-[protein] + H2O = L-tyrosyl-[protein] + phosphate. In terms of biological role, plays a role in vesicle-mediated secretory processes. Required for normal accumulation of secretory vesicles in hippocampus, pituitary and pancreatic islets. Required for the accumulation of normal levels of insulin-containing vesicles and preventing their degradation. Plays a role in insulin secretion in response to glucose stimuli. Required for normal accumulation of the neurotransmitters norepinephrine, dopamine and serotonin in the brain. In females, but not in males, required for normal accumulation and secretion of pituitary hormones, such as luteinizing hormone (LH) and follicle-stimulating hormone (FSH). Required to maintain normal levels of renin expression and renin release. May regulate catalytic active protein-tyrosine phosphatases such as PTPRA through dimerization. Has phosphatidylinositol phosphatase activity; the PIPase activity is involved in its ability to regulate insulin secretion. Can dephosphorylate phosphatidylinositol 4,5-biphosphate, phosphatidylinositol 5-phosphate and phosphatidylinositol 3-phosphate. Regulates PI(4,5)P2 level in the plasma membrane and localization of cofilin at the plasma membrane and thus is indirectly involved in regulation of actin dynamics related to cell migration and metastasis; upon hydrolysis of PI(4,5)P2 cofilin is released from the plasma membrane and acts in the cytoplasm in severing F-actin filaments. This Rattus norvegicus (Rat) protein is Receptor-type tyrosine-protein phosphatase N2 (Ptprn2).